The primary structure comprises 83 residues: Sec-independent protein translocase protein TatA (83 aa).

A helical membrane pass occupies residues 2–22 (GLGGISIWQLLIVLVIVLLLF). Basic and acidic residues-rich tracts occupy residues 50–65 (AAKQEAEEAEQKKVAA) and 74–83 (AEQKEKTEAK). The interval 50 to 83 (AAKQEAEEAEQKKVAAEEAAAAKTAEQKEKTEAK) is disordered.

It belongs to the TatA/E family. As to quaternary structure, the Tat system comprises two distinct complexes: a TatABC complex, containing multiple copies of TatA, TatB and TatC subunits, and a separate TatA complex, containing only TatA subunits. Substrates initially bind to the TatABC complex, which probably triggers association of the separate TatA complex to form the active translocon.

The protein resides in the cell inner membrane. Part of the twin-arginine translocation (Tat) system that transports large folded proteins containing a characteristic twin-arginine motif in their signal peptide across membranes. TatA could form the protein-conducting channel of the Tat system. The protein is Sec-independent protein translocase protein TatA of Saccharophagus degradans (strain 2-40 / ATCC 43961 / DSM 17024).